The sequence spans 106 residues: Putative membrane protein insertion efficiency factor (106 aa).

Belongs to the UPF0161 family.

It is found in the cell inner membrane. Could be involved in insertion of integral membrane proteins into the membrane. The polypeptide is Putative membrane protein insertion efficiency factor (Acinetobacter baylyi (strain ATCC 33305 / BD413 / ADP1)).